We begin with the raw amino-acid sequence, 141 residues long: Hemoglobin subunit alpha-D (141 aa).

Residues 1 to 141 (VLTAEDRRLL…VADVLSEKYR (141 aa)) enclose the Globin domain. His-57 and His-87 together coordinate heme b.

The protein belongs to the globin family. In terms of assembly, the deoxy-Hb is a heterotetramer of two alpha and two beta chains, but oxygenation results in dissociation to dimers. In terms of tissue distribution, red blood cells.

Involved in oxygen transport from the lung to the various peripheral tissues. In Erythrolamprus miliaris (South American water snake), this protein is Hemoglobin subunit alpha-D (HBAD).